Consider the following 188-residue polypeptide: NADH-quinone oxidoreductase subunit B 1 (188 aa).

Positions 39, 40, 105, and 134 each coordinate [4Fe-4S] cluster.

It belongs to the complex I 20 kDa subunit family. NDH-1 is composed of 14 different subunits. Subunits NuoB, C, D, E, F, and G constitute the peripheral sector of the complex. It depends on [4Fe-4S] cluster as a cofactor.

It localises to the cell inner membrane. The enzyme catalyses a quinone + NADH + 5 H(+)(in) = a quinol + NAD(+) + 4 H(+)(out). NDH-1 shuttles electrons from NADH, via FMN and iron-sulfur (Fe-S) centers, to quinones in the respiratory chain. The immediate electron acceptor for the enzyme in this species is believed to be ubiquinone. Couples the redox reaction to proton translocation (for every two electrons transferred, four hydrogen ions are translocated across the cytoplasmic membrane), and thus conserves the redox energy in a proton gradient. This chain is NADH-quinone oxidoreductase subunit B 1, found in Solibacter usitatus (strain Ellin6076).